Consider the following 804-residue polypeptide: G-type lectin S-receptor-like serine/threonine-protein kinase At1g61490 (804 aa).

An N-terminal signal peptide occupies residues 1 to 24 (MGKKRIVFFACLLLFTVLLRFSYA). Residues 25–144 (GITTESPLSV…ASGRTLWESF (120 aa)) enclose the Bulb-type lectin domain. Over 25–425 (GITTESPLSV…SELGGNKRNK (401 aa)) the chain is Extracellular. N-linked (GlcNAc...) asparagine glycosylation is found at Asn-53, Asn-94, Asn-117, Asn-134, Asn-236, and Asn-267. The 37-residue stretch at 278–314 (PANSCDIYGVCGPFGLCIVSVPLKCKCLKGFVPHSTE) folds into the EGF-like domain. Cystine bridges form between Cys-282–Cys-294 and Cys-288–Cys-302. N-linked (GlcNAc...) asparagine glycans are attached at residues Asn-320, Asn-336, and Asn-375. In terms of domain architecture, PAN spans 333–415 (CQGNSTGKDV…GEILSIRLAH (83 aa)). Disulfide bonds link Cys-368–Cys-389 and Cys-372–Cys-378. The chain crosses the membrane as a helical span at residues 426-446 (IIVASTVSLSLFVILTSAAFG). At 447-804 (FWRYRVKHKA…EMTQSMILGR (358 aa)) the chain is on the cytoplasmic side. The 286-residue stretch at 490 to 775 (FSLSNKLGQG…DLPSPKQPTF (286 aa)) folds into the Protein kinase domain. Residues 496-504 (LGQGGFGSV) and Lys-518 contribute to the ATP site. Residues Ser-524 and Ser-539 each carry the phosphoserine modification. The caM-binding stretch occupies residues 579–596 (RKKLEVDWPKRFDIVQGI). The Proton acceptor role is filled by Asp-615. 2 positions are modified to phosphoserine: Ser-619 and Ser-632. At Thr-649 the chain carries Phosphothreonine. Residue Ser-692 is modified to Phosphoserine.

Belongs to the protein kinase superfamily. Ser/Thr protein kinase family.

Its subcellular location is the cell membrane. It carries out the reaction L-seryl-[protein] + ATP = O-phospho-L-seryl-[protein] + ADP + H(+). The catalysed reaction is L-threonyl-[protein] + ATP = O-phospho-L-threonyl-[protein] + ADP + H(+). The sequence is that of G-type lectin S-receptor-like serine/threonine-protein kinase At1g61490 from Arabidopsis thaliana (Mouse-ear cress).